We begin with the raw amino-acid sequence, 1502 residues long: Clustered mitochondria protein homolog (1502 aa).

Disordered regions lie at residues 1 to 62 (MSES…EPLD), 571 to 615 (AQAE…NPMM), 755 to 799 (AEAE…EEDR), 1054 to 1085 (KDQE…GETV), 1381 to 1403 (ARER…RLGG), and 1429 to 1502 (GQGG…GAKR). The span at 7-35 (AAAQNGQAEEQQLQQQLDEQQQLEEQQQL) shows a compositional bias: low complexity. The span at 53-62 (KPKDSTEPLD) shows a compositional bias: basic and acidic residues. The Clu domain maps to 399-693 (EILRTQLAFL…RLAPVDVEWL (295 aa)). The segment covering 575–586 (TEAEAETADAVE) has biased composition (acidic residues). A compositionally biased stretch (basic and acidic residues) spans 587-606 (GEQKKEDWVDVEKPTEKSGS). Positions 781–792 (EEQSAAASAAAA) are enriched in low complexity. Residues 1054 to 1069 (KDQEEEENKREENIKS) are compositionally biased toward basic and acidic residues. Positions 1429–1451 (GQGGNPSANAAAATAGQGEQANG) are enriched in low complexity. A compositionally biased stretch (basic and acidic residues) spans 1462–1471 (RGTESLEELV). Positions 1486-1502 (KRGKNALRGKRRTGAKR) are enriched in basic residues.

This sequence belongs to the CLU family. In terms of assembly, may associate with the eukaryotic translation initiation factor 3 (eIF-3) complex.

It localises to the cytoplasm. MRNA-binding protein involved in proper cytoplasmic distribution of mitochondria. In Cryptococcus neoformans var. neoformans serotype D (strain B-3501A) (Filobasidiella neoformans), this protein is Clustered mitochondria protein homolog.